Here is a 309-residue protein sequence, read N- to C-terminus: Ornithine carbamoyltransferase (309 aa).

Carbamoyl phosphate contacts are provided by residues 57–60 (STRT), Q84, R108, and 135–138 (HPCQ). L-ornithine-binding positions include N166, D224, and 228–229 (SM). Carbamoyl phosphate is bound by residues 264 to 265 (CL) and R292.

Belongs to the aspartate/ornithine carbamoyltransferase superfamily. OTCase family.

The protein resides in the cytoplasm. The catalysed reaction is carbamoyl phosphate + L-ornithine = L-citrulline + phosphate + H(+). Its pathway is amino-acid biosynthesis; L-arginine biosynthesis; L-arginine from L-ornithine and carbamoyl phosphate: step 1/3. Its function is as follows. Reversibly catalyzes the transfer of the carbamoyl group from carbamoyl phosphate (CP) to the N(epsilon) atom of ornithine (ORN) to produce L-citrulline. In Paracidovorax citrulli (strain AAC00-1) (Acidovorax citrulli), this protein is Ornithine carbamoyltransferase.